Here is a 181-residue protein sequence, read N- to C-terminus: ADP-ribosylation factor 1 (181 aa).

Residue G2 is the site of N-myristoyl glycine attachment. The segment at L3 to K16 is important for the stable binding to the membranes. GTP-binding positions include A27–T32, N126–D129, and A160.

This sequence belongs to the small GTPase superfamily. Arf family. In terms of assembly, may interact with GTPase RAB5b.

The protein resides in the golgi apparatus membrane. The catalysed reaction is GTP + H2O = GDP + phosphate + H(+). With respect to regulation, alternates between an inactive GDP-bound form and an active GTP-bound form. Intrinsic GTPase activity is almost undetectable in vitro. Activated by a guanine nucleotide-exchange factor (GEF) and inactivated by GTPase-activating protein ARFGAP1. Functionally, small GTPase involved in protein trafficking between different compartments. Modulates vesicle budding and uncoating within the Golgi complex. In its GTP-bound form, triggers the recruitment of coatomer proteins to the Golgi membrane. The hydrolysis of ARF1-bound GTP, which is mediated by ARFGAPs proteins, is required for dissociation of coat proteins from Golgi membranes and vesicles. Regulates the transport of N-acylated AK2 to the parasitophorous vacuole membrane. May be involved in the activation of lipid kinase PIP5K. In Plasmodium falciparum (isolate 3D7), this protein is ADP-ribosylation factor 1.